Reading from the N-terminus, the 721-residue chain is Polyribonucleotide nucleotidyltransferase (721 aa).

Residues aspartate 487 and aspartate 493 each contribute to the Mg(2+) site. The KH domain maps to 554–613 (PRIETFKIPTDKIREVIGTGGKVIREIVEKTGAKVNIDDDGTVKVASSDGESIKAAIKWI). The 69-residue stretch at 623-691 (NAIYDGTVVK…DRGKTRLSMK (69 aa)) folds into the S1 motif domain. The segment at 697 to 721 (TGEDLEAKQKAEAEKAKAEGAPAAE) is disordered. The span at 701–714 (LEAKQKAEAEKAKA) shows a compositional bias: basic and acidic residues.

This sequence belongs to the polyribonucleotide nucleotidyltransferase family. The cofactor is Mg(2+).

It is found in the cytoplasm. It catalyses the reaction RNA(n+1) + phosphate = RNA(n) + a ribonucleoside 5'-diphosphate. Involved in mRNA degradation. Catalyzes the phosphorolysis of single-stranded polyribonucleotides processively in the 3'- to 5'-direction. The sequence is that of Polyribonucleotide nucleotidyltransferase from Rhodopseudomonas palustris (strain BisA53).